A 285-amino-acid polypeptide reads, in one-letter code: Probable E3 ubiquitin-protein ligase IE1 (285 aa).

At 1 to 201 the chain is on the cytoplasmic side; the sequence is MASKDSDVRC…LPGYWDRDDR (201 aa). Residues 124–183 form an RING-CH-type zinc finger; sequence SIDEEGKQCWICRDGESLPEARYCNCYGDLQYCHEECLKTWISMSGEKKCKFCQTPYKVN. Zn(2+) is bound by residues Cys-132, Cys-135, Cys-147, Cys-149, His-157, Cys-160, Cys-173, and Cys-176. A helical membrane pass occupies residues 202–222; that stretch reads FVFIAGFIGMGTILAGWIASF. Residues 223-238 lie on the Extracellular side of the membrane; the sequence is FYLLVVLCGKYFTYKD. The chain crosses the membrane as a helical span at residues 239–259; it reads VMIVVGGLAIIQVVGLMFSLF. Residues 260-285 are Cytoplasmic-facing; sequence MYFQIGNLLRQYINYMTETNIDPLRT.

The protein resides in the membrane. It catalyses the reaction S-ubiquitinyl-[E2 ubiquitin-conjugating enzyme]-L-cysteine + [acceptor protein]-L-lysine = [E2 ubiquitin-conjugating enzyme]-L-cysteine + N(6)-ubiquitinyl-[acceptor protein]-L-lysine.. It functions in the pathway protein modification; protein ubiquitination. Controls the expression of later classes of genes and also of the IE genes (Potential). E3 ubiquitin-protein ligase. E3 ubiquitin ligases accept ubiquitin from an E2 ubiquitin-conjugating enzyme in the form of a thioester and then directly transfer the ubiquitin to targeted substrates. This is Probable E3 ubiquitin-protein ligase IE1 (IE1) from Bovine herpesvirus 4 (strain DN-599) (BoHV-4).